The following is a 354-amino-acid chain: MGCTMSQEERAALERSRMIEKNLKEDGMQAAKDIKLLLLGAGESGKSTIVKQMKIIHESGFTAEDYKQYKPVVYSNTVQSLVAILRAMSNLGVSFGSADREVDAKLVMDVVARMEDTEPFSEELLSSMKRLWGDAGVQDCFSRSNEYQLNDSAKYFLDDLERLGEAIYQPTEQDILRTRVKTTGIVEVHFTFKNLNFKLFDVGGQRSERKKWIHCFEDVTAIIFCVAMSEYDQVLHEDETTNRMHESLKLFDSICNNKWFTDTSIILFLNKKDLFEEKIKKSPLTICFPEYSGRQDYHEASAYIQAQFEAKNKSANKEIYCHMTCATDTTNIQFVFDAVTDVIIANNLRGCGLY.

Residue Gly-2 is the site of N-myristoyl glycine attachment. Cys-3 carries the S-palmitoyl cysteine lipid modification. The 323-residue stretch at 32–354 (KDIKLLLLGA…ANNLRGCGLY (323 aa)) folds into the G-alpha domain. The segment at 35-48 (KLLLLGAGESGKST) is G1 motif. GTP-binding positions include 40–47 (GAGESGKS), 176–182 (LRTRVKT), 201–205 (DVGGQ), 270–273 (NKKD), and Ala-326. Ser-47 and Thr-182 together coordinate Mg(2+). The interval 174 to 182 (DILRTRVKT) is G2 motif. A G3 motif region spans residues 197-206 (FKLFDVGGQR). The interval 266 to 273 (ILFLNKKD) is G4 motif. Positions 324–329 (TCATDT) are G5 motif.

The protein belongs to the G-alpha family. G(i/o/t/z) subfamily. As to quaternary structure, g proteins are composed of 3 units; alpha, beta and gamma. The alpha chain contains the guanine nucleotide binding site. Interacts (in GDP-bound form) with gpr-1; gpr-1 forms a complex with gpr-2 and lin-5. Interacts (in GDP-bound form) with gpb-1. Interacts (in GDP-bound form) with gbas-1 (via GBA motif); the interaction leads to activation of goa-1. In terms of tissue distribution, expressed in the ASER neuron and the intestine.

In terms of biological role, guanine nucleotide-binding proteins (G proteins) are involved as modulators or transducers in various transmembrane signaling systems. In the 1-cell embryo, probably together with gpa-16, controls nuclear rotation and spindle elongation during mitosis. During the first embryonic cell divisions, plays a role in gpr-1/2 cortical localization and in the proper orientation of EMS blastomere mitotic spindle. Polarity determinants (par genes) may regulate lin-5/gpr-1/gpr-2/goa-1 locally to create the asymmetric forces that drive spindle movement. Involved in chemosensory responses to attractive and repellent odors detected by AWC and AWB sensory neurons, respectively. In ASER neurons, acts downstream of glr-3 to regulate cold avoidance behavior via calcium signaling, and it may also play a role in sensing cold in the intestine. Negatively regulates axon regeneration after injury downstream of the inhibitory compound arachidonoyl ethanolamide (AEA) by antagonizing the activation of the JNK pathway (mlk-1/mek-1/kgb-1). In neurons, may negatively regulate diacylglycerol (DAG) production mediated by egl-30 signaling cascade and thereby negatively regulates acetylcholine release. Couples to the muscarinic acetylcholine receptor gar-2 to negatively regulate cholinergic receptor activity in the presence of high levels of acetylcholine in ventral cord motor neurons. Plays a role in the navigational capacity of sperm and the targeting of sperm derived from males to the fertilization site in the uterus of hermaphrodites. Involved in egg-laying and in regulating dopamine-mediated locomotion. Most likely couples to the dopamine receptors dop-2 and dop-3 to positively regulate the dopamine-mediated suppression of crh-1/CREB1 transcription factor activation in cholinergic SIA neurons in the presence of food. The polypeptide is Guanine nucleotide-binding protein G(o) subunit alpha (Caenorhabditis elegans).